The following is a 341-amino-acid chain: NADH-quinone oxidoreductase subunit H 2 (341 aa).

The next 8 membrane-spanning stretches (helical) occupy residues 13–33 (IIVI…IAYI), 82–102 (GVFL…WAVI), 115–135 (VGVL…IMAG), 161–181 (IGFV…TAIV), 190–210 (MLGW…VSAL), 248–268 (YVAI…GWLP), 277–297 (WVPG…LFAM), and 317–337 (VFLP…QFAG).

Belongs to the complex I subunit 1 family. As to quaternary structure, NDH-1 is composed of 14 different subunits. Subunits NuoA, H, J, K, L, M, N constitute the membrane sector of the complex.

It is found in the cell inner membrane. It carries out the reaction a quinone + NADH + 5 H(+)(in) = a quinol + NAD(+) + 4 H(+)(out). Functionally, NDH-1 shuttles electrons from NADH, via FMN and iron-sulfur (Fe-S) centers, to quinones in the respiratory chain. The immediate electron acceptor for the enzyme in this species is believed to be ubiquinone. Couples the redox reaction to proton translocation (for every two electrons transferred, four hydrogen ions are translocated across the cytoplasmic membrane), and thus conserves the redox energy in a proton gradient. This subunit may bind ubiquinone. The polypeptide is NADH-quinone oxidoreductase subunit H 2 (Rhodopseudomonas palustris (strain BisB5)).